Consider the following 348-residue polypeptide: NADH-ubiquinone oxidoreductase chain 2 (348 aa).

The next 10 membrane-spanning stretches (helical) occupy residues 2-22, 26-46, 55-75, 96-116, 149-169, 178-198, 199-219, 242-262, 276-296, and 323-343; these read SPYVFLIISISLFLGTSLTLF, WLMAWMGLEINTLAIIPMMTY, AAIKYFLTQATASMLVMFAII, VLMTLALAMKLGLAPFHFWVP, LNMKVLITLAFLSTMLGGWGG, ILAYSSIAHMGWMTIVMMINP, SLALLNLLIYIIATLTLFLML, TAILLTLLSLGGLPPLTGFMP, IIMATLMALSALLNLFFYMRI, and INIIPTLTIISSLLLPLTPLL.

The protein belongs to the complex I subunit 2 family. Core subunit of respiratory chain NADH dehydrogenase (Complex I) which is composed of 45 different subunits. Interacts with TMEM242.

The protein localises to the mitochondrion inner membrane. The catalysed reaction is a ubiquinone + NADH + 5 H(+)(in) = a ubiquinol + NAD(+) + 4 H(+)(out). In terms of biological role, core subunit of the mitochondrial membrane respiratory chain NADH dehydrogenase (Complex I) that is believed to belong to the minimal assembly required for catalysis. Complex I functions in the transfer of electrons from NADH to the respiratory chain. The immediate electron acceptor for the enzyme is believed to be ubiquinone. This Osphranter robustus (Wallaroo) protein is NADH-ubiquinone oxidoreductase chain 2.